Here is a 464-residue protein sequence, read N- to C-terminus: Sugar transporter ERD6-like 1 (464 aa).

12 consecutive transmembrane segments (helical) span residues isoleucine 23–cysteine 43, valine 72–glycine 92, glutamine 95–histidine 115, glycine 125–isoleucine 145, phenylalanine 156–phenylalanine 176, threonine 180–proline 200, leucine 263–alanine 283, isoleucine 298–valine 318, leucine 326–tyrosine 346, proline 359–leucine 379, leucine 399–methionine 419, and phenylalanine 424–leucine 444.

The protein belongs to the major facilitator superfamily. Sugar transporter (TC 2.A.1.1) family.

Its subcellular location is the membrane. Functionally, sugar transporter. This chain is Sugar transporter ERD6-like 1 (SUGTL4), found in Arabidopsis thaliana (Mouse-ear cress).